The sequence spans 439 residues: Methylenetetrahydrofolate--tRNA-(uracil-5-)-methyltransferase TrmFO (439 aa).

8–13 contacts FAD; it reads GAGLAG.

The protein belongs to the MnmG family. TrmFO subfamily. It depends on FAD as a cofactor.

The protein resides in the cytoplasm. The enzyme catalyses uridine(54) in tRNA + (6R)-5,10-methylene-5,6,7,8-tetrahydrofolate + NADH + H(+) = 5-methyluridine(54) in tRNA + (6S)-5,6,7,8-tetrahydrofolate + NAD(+). It carries out the reaction uridine(54) in tRNA + (6R)-5,10-methylene-5,6,7,8-tetrahydrofolate + NADPH + H(+) = 5-methyluridine(54) in tRNA + (6S)-5,6,7,8-tetrahydrofolate + NADP(+). Its function is as follows. Catalyzes the folate-dependent formation of 5-methyl-uridine at position 54 (M-5-U54) in all tRNAs. The chain is Methylenetetrahydrofolate--tRNA-(uracil-5-)-methyltransferase TrmFO from Lacticaseibacillus paracasei (strain ATCC 334 / BCRC 17002 / CCUG 31169 / CIP 107868 / KCTC 3260 / NRRL B-441) (Lactobacillus paracasei).